Here is a 55-residue protein sequence, read N- to C-terminus: Large ribosomal subunit protein bL32 (55 aa).

The segment covering 1 to 19 (MAVPKRRMSRANTHSRRSQ) has biased composition (basic residues). The disordered stretch occupies residues 1–20 (MAVPKRRMSRANTHSRRSQW).

Belongs to the bacterial ribosomal protein bL32 family.

The sequence is that of Large ribosomal subunit protein bL32 from Corynebacterium jeikeium (strain K411).